Consider the following 642-residue polypeptide: MPCGEDWLSHPLGIVQGFFAQNGVNPDWEKKVIEYFKEKLKENNAPKWVPSLNEVPLHYLKPNSFVKFRCMVQDMFDPEFYMGVYETVNRNTKARVLHFGKYRDVAECGPQQEVDLNSPRTTTLERQTFYCVPVPGESMWVKEAYVNANQARVSPSTSYTPSRHKRSYEDDEDMDLQPNKQKDQHMGARQAGNVGGLQWCGEPKRLETEASSGQQLSSLNLSSPFDLNFPLPGEKGPACLVKVYEDWDCFKVNDVLELYGILSVDPVLSILNNDERDASSLLDPMECTDMAEEQRVHSPPASLVPRIHVVLAQKLQHINPLLPACLNKEESKTCKFVSGFMSELSPVRAELLGFLTHALLGDSLAAEYLILHLISTVYTRRDVLPLGKFTVNLSGCPRNSTFTEHLYRIIQHLVPASFRLQMTIENMNHLKFIPHKDYTANRLVSGLLQLPSNTSLVIDETLLEQGQLDTPGVHNVTALSNLITWQKVDYDFSYHQMEFPCNINVFITSEGRSLLPADCQIHLQPQLMPPNMEEYMNSLLSAVLPSVLNKFRIYLTLLRFLDYSISDEITKAVEDDFVEMRKNDPQSITADDLHQLLIVARFLSLSAGQTTLSRERWLRAKQLESLRRARLQQQKCVNGNEL.

The segment covering 151-161 (ARVSPSTSYTP) has biased composition (polar residues). The segment at 151–188 (ARVSPSTSYTPSRHKRSYEDDEDMDLQPNKQKDQHMGA) is disordered. Ser-154 carries the phosphoserine modification. Thr-160 bears the Phosphothreonine mark. Phosphoserine is present on residues Ser-167 and Ser-298.

The protein belongs to the MCMBP family. Interacts with the MCM complex: associates with the MCM3-7 complex which lacks MCM2, while it does not interact with the MCM complex when MCM2 is present (MCM2-7 complex). Interacts with the RPA complex, when composed of all RPA1, RPA2 and RPA3 components, but not with RPA1 or RPA2 alone.

It localises to the nucleus. Associated component of the MCM complex that acts as a regulator of DNA replication. Binds to the MCM complex during late S phase and promotes the disassembly of the MCM complex from chromatin, thereby acting as a key regulator of pre-replication complex (pre-RC) unloading from replicated DNA. Can dissociate the MCM complex without addition of ATP; probably acts by destabilizing interactions of each individual subunits of the MCM complex. Required for sister chromatid cohesion. In Bos taurus (Bovine), this protein is Mini-chromosome maintenance complex-binding protein (MCMBP).